The sequence spans 536 residues: Glucose-6-phosphate isomerase (536 aa).

Residue glutamate 345 is the Proton donor of the active site. Catalysis depends on residues histidine 376 and lysine 505.

Belongs to the GPI family.

It is found in the cytoplasm. The enzyme catalyses alpha-D-glucose 6-phosphate = beta-D-fructose 6-phosphate. Its pathway is carbohydrate biosynthesis; gluconeogenesis. It functions in the pathway carbohydrate degradation; glycolysis; D-glyceraldehyde 3-phosphate and glycerone phosphate from D-glucose: step 2/4. Catalyzes the reversible isomerization of glucose-6-phosphate to fructose-6-phosphate. This is Glucose-6-phosphate isomerase from Ruegeria sp. (strain TM1040) (Silicibacter sp.).